We begin with the raw amino-acid sequence, 195 residues long: MKRFARKETIYLRGEEARTLYRLEEGLVRVVELLPDGRLITLRHVLPGDYFGEEALEGKAYRYTAEAMTEAVVQGLEPRAMDHEALHRVARNLARQMRRVQAYEAHLQTGELRARIARYLLFLADTPLSARDRQGIYVTVSHEEIADATASIRESVSKVLADLRREGLIATAYRRVYLLDLAALEREAGSALEAA.

The region spanning 110–182 (GELRARIARY…YRRVYLLDLA (73 aa)) is the HTH crp-type domain. Residues 142–161 (HEEIADATASIRESVSKVLA) constitute a DNA-binding region (H-T-H motif).

As to quaternary structure, homodimer.

Functionally, activates transcription. Positively regulates PcrtB promoter upstream of the crtB operon in a cAMP-independent manner. Regulated genes include genes encoding DNA photolyase, phytoene synthase and cytochrome P450 monooxygenase, which are involved in carotenoid biosynthesis. Positively regulates the light-inducible gene cluster in the megaplasmid in a cAMP-independent manner. The polypeptide is Transcriptional regulator LdrP (Thermus thermophilus (strain ATCC 27634 / DSM 579 / HB8)).